A 144-amino-acid chain; its full sequence is Large ribosomal subunit protein uL15 (144 aa).

The interval 1-58 (MHLNTLSPAPGSHKARKRCGRGIGSGIGKTGGRGHKGQKSRSGGSVRPGFEGGQMPLK) is disordered. The segment covering 21–31 (RGIGSGIGKTG) has biased composition (gly residues).

The protein belongs to the universal ribosomal protein uL15 family. In terms of assembly, part of the 50S ribosomal subunit.

Its function is as follows. Binds to the 23S rRNA. The polypeptide is Large ribosomal subunit protein uL15 (Colwellia psychrerythraea (strain 34H / ATCC BAA-681) (Vibrio psychroerythus)).